A 112-amino-acid chain; its full sequence is Omega-agatoxin-1A (112 aa).

Positions 1-19 are cleaved as a signal peptide; that stretch reads MMKFVVFLACLFVAAHSFA. Positions 20-36 are excised as a propeptide; it reads VEGEEEYFEAEVPELER. Positions 103 to 109 are cleaved as a propeptide — glu-rich; that stretch reads RSEESER.

This sequence belongs to the neurotoxin 04 (omega-agtx) family. 01 (type I omega-agtx) subfamily. As to quaternary structure, heterodimer of two subunits, a major chain and a minor chain, linked by a disulfide bond. Proteolytically processed to yield the major and the minor chains. As to expression, expressed by the venom gland.

Its subcellular location is the secreted. In terms of biological role, omega-agatoxins are antagonists of voltage-gated calcium channels. They block insect neuromuscular transmission presynaptically. This toxin is a blocker of L-type calcium channels (Cav/CACNA1). The protein is Omega-agatoxin-1A of Agelenopsis aperta (North American funnel-web spider).